A 54-amino-acid polypeptide reads, in one-letter code: Califin-C (54 aa).

A disulfide bridge links cysteine 25 with cysteine 53. Leucine amide is present on leucine 36.

Belongs to the molluscan ELH family. This protein consists of a large 36-residue subunit, bound by a single disulfide-bond to a small 18-residue subunit.

Its subcellular location is the secreted. Its function is as follows. Injected in sexually mature animals califin C excites LB and LC cells of the abdominal ganglion and cause egg-laying. The protein is Califin-C of Aplysia californica (California sea hare).